The following is a 251-amino-acid chain: Triosephosphate isomerase (251 aa).

9 to 11 provides a ligand contact to substrate; that stretch reads NWK. His94 functions as the Electrophile in the catalytic mechanism. Glu167 acts as the Proton acceptor in catalysis. Substrate-binding positions include Gly173, Ser213, and 234 to 235; that span reads GG.

The protein belongs to the triosephosphate isomerase family. Homodimer.

The protein localises to the cytoplasm. The enzyme catalyses D-glyceraldehyde 3-phosphate = dihydroxyacetone phosphate. The protein operates within carbohydrate biosynthesis; gluconeogenesis. It participates in carbohydrate degradation; glycolysis; D-glyceraldehyde 3-phosphate from glycerone phosphate: step 1/1. Involved in the gluconeogenesis. Catalyzes stereospecifically the conversion of dihydroxyacetone phosphate (DHAP) to D-glyceraldehyde-3-phosphate (G3P). The protein is Triosephosphate isomerase of Finegoldia magna (strain ATCC 29328 / DSM 20472 / WAL 2508) (Peptostreptococcus magnus).